Reading from the N-terminus, the 489-residue chain is Bypass of stop codon protein 5 (489 aa).

The interval 1 to 42 is disordered; that stretch reads MQESKEPQNKFEGCQRISSSSSTLFGGTSFEEPRCGTSQGKE. The span at 18–30 shows a compositional bias: low complexity; the sequence is SSSSSTLFGGTSF. A phosphoserine mark is found at Ser-111 and Ser-350.

The protein belongs to the BUL1 family.

Functionally, appears to play a role in translation fidelity, and may act when translation is compromised. May be a component of the ubiquitination pathway. The polypeptide is Bypass of stop codon protein 5 (BSC5) (Saccharomyces cerevisiae (strain ATCC 204508 / S288c) (Baker's yeast)).